Reading from the N-terminus, the 79-residue chain is Acyl carrier protein (79 aa).

One can recognise a Carrier domain in the interval 2 to 77 (SEIGERVKKI…DAVKFLEKNA (76 aa)). The residue at position 37 (serine 37) is an O-(pantetheine 4'-phosphoryl)serine.

It belongs to the acyl carrier protein (ACP) family. Post-translationally, 4'-phosphopantetheine is transferred from CoA to a specific serine of apo-ACP by AcpS. This modification is essential for activity because fatty acids are bound in thioester linkage to the sulfhydryl of the prosthetic group.

The protein localises to the cytoplasm. Its pathway is lipid metabolism; fatty acid biosynthesis. Functionally, carrier of the growing fatty acid chain in fatty acid biosynthesis. This chain is Acyl carrier protein, found in Rhodopseudomonas palustris (strain BisA53).